A 660-amino-acid polypeptide reads, in one-letter code: Sodium/nucleoside cotransporter 2 (660 aa).

The residue at position 46 (Ser-46) is a Phosphoserine. 14 consecutive transmembrane segments (helical) span residues 82–102, 106–125, 150–168, 174–194, 202–222, 235–255, 262–282, 297–316, 338–357, 364–383, 425–445, 456–476, 531–551, and 569–589; these read ILLG…CILN, ALAL…CHFL, KRVF…LALD, EQLI…ACSK, RTVF…IRTE, IQIF…DTLV, QSLP…YLGL, TMGT…FVGM, VMTG…FISF, LISA…KLVY, VAAN…TLSW, SFQV…GVQW, TTFS…LGGL, and ALFT…ILYV.

It belongs to the concentrative nucleoside transporter (CNT) (TC 2.A.41) family.

It localises to the membrane. The protein localises to the apicolateral cell membrane. The enzyme catalyses adenosine(out) + Na(+)(out) = adenosine(in) + Na(+)(in). It carries out the reaction inosine(out) + Na(+)(out) = inosine(in) + Na(+)(in). It catalyses the reaction guanosine(out) + Na(+)(out) = guanosine(in) + Na(+)(in). The catalysed reaction is uridine(out) + Na(+)(out) = uridine(in) + Na(+)(in). Functionally, sodium-dependent and purine-selective transporter. Exhibits the transport characteristics of the nucleoside transport system cif or N1 subtype (N1/cif) (selective for purine nucleosides and uridine). Plays a critical role in specific uptake and salvage of purine nucleosides in kidney and other tissues. May contribute to regulate the transport of organic compounds in testes across the blood-testis-barrier. In Mus musculus (Mouse), this protein is Sodium/nucleoside cotransporter 2 (Slc28a2).